Here is a 231-residue protein sequence, read N- to C-terminus: Large ribosomal subunit protein uL1 (231 aa).

The protein belongs to the universal ribosomal protein uL1 family. In terms of assembly, part of the 50S ribosomal subunit.

Functionally, binds directly to 23S rRNA. The L1 stalk is quite mobile in the ribosome, and is involved in E site tRNA release. Its function is as follows. Protein L1 is also a translational repressor protein, it controls the translation of the L11 operon by binding to its mRNA. The sequence is that of Large ribosomal subunit protein uL1 from Acidovorax ebreus (strain TPSY) (Diaphorobacter sp. (strain TPSY)).